The chain runs to 247 residues: Trypsin-2 (247 aa).

The first 15 residues, 1 to 15 (MNLLLILTFVAAAVA), serve as a signal peptide directing secretion. Residues 16–23 (APFDDDDK) constitute a propeptide, activation peptide. The 221-residue stretch at 24-244 (IVGGYICEEN…YVDWIKDTIA (221 aa)) folds into the Peptidase S1 domain. 4 cysteine pairs are disulfide-bonded: Cys30–Cys160, Cys48–Cys64, Cys171–Cys185, and Cys196–Cys220. His63 serves as the catalytic Charge relay system. 4 residues coordinate Ca(2+): Glu75, Asn77, Val80, and Glu85. Catalysis depends on Asp107, which acts as the Charge relay system. At Tyr154 the chain carries Sulfotyrosine. Residue Ser200 is the Charge relay system of the active site.

Belongs to the peptidase S1 family. Requires Ca(2+) as cofactor. Post-translationally, sulfated on tyrosine. Sulfation at Tyr-154 increases selectivity towards basic versus apolar residues at the P2' position of inhibitors that bind in a substrate-like fashion. Although the increase in selectivity is relatively small, it may facilitate digestion of a broader range of dietary proteins. Expressed in Paneth cells, at the base of small intestinal crypts.

It is found in the secreted. Its subcellular location is the extracellular space. It catalyses the reaction Preferential cleavage: Arg-|-Xaa, Lys-|-Xaa.. In the ileum, may be involved in defensin processing, including DEFA5. This is Trypsin-2 (PRSS2) from Homo sapiens (Human).